Reading from the N-terminus, the 628-residue chain is Probable alpha-L-arabinofuranosidase A (628 aa).

The first 25 residues, methionine 1–glycine 25, serve as a signal peptide directing secretion. N-linked (GlcNAc...) asparagine glycosylation is found at asparagine 36, asparagine 51, asparagine 74, asparagine 152, asparagine 171, asparagine 260, asparagine 359, asparagine 440, asparagine 493, and asparagine 610.

This sequence belongs to the glycosyl hydrolase 51 family.

The protein resides in the secreted. It carries out the reaction Hydrolysis of terminal non-reducing alpha-L-arabinofuranoside residues in alpha-L-arabinosides.. Its pathway is glycan metabolism; L-arabinan degradation. Functionally, alpha-L-arabinofuranosidase involved in the degradation of arabinoxylan, a major component of plant hemicellulose. Acts only on small linear 1,5-alpha-linked L-arabinofuranosyl oligosaccharides. In Aspergillus niger (strain ATCC MYA-4892 / CBS 513.88 / FGSC A1513), this protein is Probable alpha-L-arabinofuranosidase A (abfA).